A 371-amino-acid polypeptide reads, in one-letter code: MNGSDSQGAEDSSQEGGGGWQPEAVLVPLFFALIFLVGAVGNALVLAVLLRGGQAVSTTNLFILNLGVADLCFILCCVPFQATIYTLDDWVFGSLLCKAVHFLIFLTMHASSFTLAAVSLDRYLAIRYPLHSRELRTPRNALAAIGLIWGLALLFSGPYLSYYSQSQLANLTVCHPAWSAPRRRAMDLCTFVFSYLLPVLVLSLTYARTLHYLWRTVDPVAAGSGSQRAKRKVTRMIVIVAVLFCLCWMPHHALILCVWFGRFPLTRATYALRILSHLVSYANSCVNPIVYALVSKHFRKGFRKICAGLLRRAPRRASGRVCILAPGNHSGGMLEPESTDLTQVSEAAGPLVPAPALPNCTTLSRTLDPAC.

Topologically, residues 1–27 are extracellular; sequence MNGSDSQGAEDSSQEGGGGWQPEAVLV. An N-linked (GlcNAc...) asparagine glycan is attached at Asn-2. The chain crosses the membrane as a helical span at residues 28-48; sequence PLFFALIFLVGAVGNALVLAV. At 49 to 59 the chain is on the cytoplasmic side; sequence LLRGGQAVSTT. The chain crosses the membrane as a helical span at residues 60–80; that stretch reads NLFILNLGVADLCFILCCVPF. Residues 81-98 are Extracellular-facing; that stretch reads QATIYTLDDWVFGSLLCK. Cys-97 and Cys-174 form a disulfide bridge. A helical membrane pass occupies residues 99–120; the sequence is AVHFLIFLTMHASSFTLAAVSL. The Cytoplasmic segment spans residues 121–140; that stretch reads DRYLAIRYPLHSRELRTPRN. The chain crosses the membrane as a helical span at residues 141–161; that stretch reads ALAAIGLIWGLALLFSGPYLS. The Extracellular portion of the chain corresponds to 162-186; sequence YYSQSQLANLTVCHPAWSAPRRRAM. The helical transmembrane segment at 187-207 threads the bilayer; the sequence is DLCTFVFSYLLPVLVLSLTYA. The Cytoplasmic segment spans residues 208–236; sequence RTLHYLWRTVDPVAAGSGSQRAKRKVTRM. The helical transmembrane segment at 237–257 threads the bilayer; the sequence is IVIVAVLFCLCWMPHHALILC. Topologically, residues 258 to 259 are extracellular; sequence VW. The chain crosses the membrane as a helical span at residues 260-280; the sequence is FGRFPLTRATYALRILSHLVS. Residues 281 to 371 lie on the Cytoplasmic side of the membrane; that stretch reads YANSCVNPIV…TLSRTLDPAC (91 aa).

It belongs to the G-protein coupled receptor 1 family.

Its subcellular location is the cell membrane. Receptor for the hormone galanin, GALP and spexin-1. The activity of this receptor is mediated by G proteins that activate the phospholipase C/protein kinase C pathway (via G(q)) and that inhibit adenylyl cyclase (via G(i)). The chain is Galanin receptor type 2 (Galr2) from Mus musculus (Mouse).